We begin with the raw amino-acid sequence, 114 residues long: Ghrelin (114 aa).

An N-terminal signal peptide occupies residues M1–A24. T27 is lipidated: O-decanoyl threonine; alternate. T27 is lipidated: O-octanoyl threonine; alternate. The propeptide at G55–Q114 is removed in mature form.

The protein belongs to the motilin family. Post-translationally, O-octanoylated by GOAT/MBOAT4. O-octanoylation or O-decanoylation is essential for activity. The O-decanoylated form ghrelin-27-C10 differs in the length of the carbon backbone of the carboxylic acid bound to Thr-27. 33% of frog ghrelin is O-decanoylated. 80% of frog ghrelin has Asn-52 cleaved from its C-terminus giving rise to ghrelin-27. As to expression, high levels in stomach. Moderate levels in small intestine, pancreas and testis. Low levels in heart, lung and gall bladder.

Its subcellular location is the secreted. Functionally, ligand for growth hormone secretagogue receptor type 1 (GHSR). Induces the release of growth hormone from the pituitary. Has an appetite-stimulating effect, induces adiposity and stimulates gastric acid secretion. Involved in growth regulation. In Aquarana catesbeiana (American bullfrog), this protein is Ghrelin (GHRL).